The sequence spans 311 residues: Immune-associated nucleotide-binding protein 7 (311 aa).

The AIG1-type G domain occupies lysine 14–lysine 222. The interval glycine 23–serine 30 is G1. GTP-binding positions include glycine 23–alanine 31 and serine 44. Residues glycine 50–lysine 54 form a G2 region. Positions aspartate 72–glycine 75 are G3. The tract at residues threonine 142 to aspartate 145 is G4. Residues aspartate 181–lysine 183 are G5. Residue asparagine 182 participates in GTP binding. Positions tyrosine 218 to alanine 295 form a coiled coil.

It belongs to the TRAFAC class TrmE-Era-EngA-EngB-Septin-like GTPase superfamily. AIG1/Toc34/Toc159-like paraseptin GTPase family. IAN subfamily. Ubiquitous.

The sequence is that of Immune-associated nucleotide-binding protein 7 from Arabidopsis thaliana (Mouse-ear cress).